The chain runs to 715 residues: Putative pentatricopeptide repeat-containing protein At3g23330 (715 aa).

PPR repeat units lie at residues 38 to 68, 69 to 103, 104 to 138, 139 to 172, 206 to 240, 241 to 275, 276 to 306, 307 to 341, 342 to 376, 377 to 407, 408 to 442, 443 to 473, and 479 to 509; these read SHTSASIVISIYTNLKLLHEALLLFKTLKSP, PVLAWKSVIRCFTDQSLFSKALASFVEMRASGRCP, DHNVFPSVLKSCTMMMDLRFGESVHGFIVRLGMDC, DLYTGNALMNMYAKLLGMGSKISVGNVFDEMPQR, DVVSYNTIIAGYAQSGMYEDALRMVREMGTTDLKP, DSFTLSSVLPIFSEYVDVIKGKEIHGYVIRKGIDS, DVYIGSSLVDMYAKSARIEDSERVFSRLYCR, DGISWNSLVAGYVQNGRYNEALRLFRQMVTAKVKP, GAVAFSSVIPACAHLATLHLGKQLHGYVLRGGFGS, NIFIASALVDMYSKCGNIKAARKIFDRMNVL, DEVSWTAIIMGHALHGHGHEAVSLFEEMKRQGVKP, NQVAFVAVLTACSHVGLVDEAWGYFNSMTKV, and ELEHYAAVADLLGRAGKLEEAYNFISKMCVE. The interval 514-589 is type E motif; sequence VWSTLLSSCS…KPACSWIEMK (76 aa). A type E(+) motif region spans residues 590–620; the sequence is NKTHGFVSGDRSHPSMDKINEFLKAVMEQME. Residues 621–715 are type DYW motif; it reads KEGYVADTSG…RGNCSCGDYW (95 aa).

This sequence belongs to the PPR family. PCMP-H subfamily.

The chain is Putative pentatricopeptide repeat-containing protein At3g23330 (PCMP-H32) from Arabidopsis thaliana (Mouse-ear cress).